The sequence spans 162 residues: Endoribonuclease YbeY (162 aa).

Zn(2+) is bound by residues His-130, His-134, and His-140.

This sequence belongs to the endoribonuclease YbeY family. Zn(2+) serves as cofactor.

The protein resides in the cytoplasm. Its function is as follows. Single strand-specific metallo-endoribonuclease involved in late-stage 70S ribosome quality control and in maturation of the 3' terminus of the 16S rRNA. The sequence is that of Endoribonuclease YbeY from Nitratidesulfovibrio vulgaris (strain ATCC 29579 / DSM 644 / CCUG 34227 / NCIMB 8303 / VKM B-1760 / Hildenborough) (Desulfovibrio vulgaris).